Here is a 127-residue protein sequence, read N- to C-terminus: MGNRLCCGGTWSCPSTFQKKSKTGSHPRPTLSILKQQQLWQNGTKDYETTAPTYEQVLYPPASQKKTSNSTSEESDLHYADIHVLRQIRPHSLHTVKCLHSESATEYATLRFPQATPQYDSNNGTLV.

Residue threonine 30 is modified to Phosphothreonine. Residues 51 to 75 (APTYEQVLYPPASQKKTSNSTSEES) form a disordered region. The residue at position 63 (serine 63) is a Phosphoserine.

This is an uncharacterized protein from Mus musculus (Mouse).